The primary structure comprises 289 residues: Kinetochore-associated protein MTW1 (289 aa).

Residues 105–147 (RLENQKDLVIVDENELKKSEEKLREKVNDVELAFKKNEMLLKR) adopt a coiled-coil conformation.

This sequence belongs to the mis12 family. In terms of assembly, component of the MIND kinetochore complex, which is composed of at least MTW1, NNF1, NSL1 and DSN1.

It is found in the chromosome. The protein resides in the centromere. The protein localises to the kinetochore. Its subcellular location is the cytoplasm. It localises to the cytoskeleton. It is found in the spindle pole. Its function is as follows. Acts as an essential component of the kinetochore MIND complex, which is required for the spindle checkpoint and kinetochore integrity. MIND plays a role in establishing a bipolar spindle-kinetochore interaction by joining kinetochore subunits contacting DNA to those contacting microtubules. This chain is Kinetochore-associated protein MTW1 (MTW1), found in Saccharomyces cerevisiae (strain ATCC 204508 / S288c) (Baker's yeast).